Here is a 176-residue protein sequence, read N- to C-terminus: Endoribonuclease YbeY (176 aa).

Residues His117, His121, and His127 each coordinate Zn(2+).

This sequence belongs to the endoribonuclease YbeY family. It depends on Zn(2+) as a cofactor.

Its subcellular location is the cytoplasm. Its function is as follows. Single strand-specific metallo-endoribonuclease involved in late-stage 70S ribosome quality control and in maturation of the 3' terminus of the 16S rRNA. The sequence is that of Endoribonuclease YbeY from Methylocella silvestris (strain DSM 15510 / CIP 108128 / LMG 27833 / NCIMB 13906 / BL2).